A 375-amino-acid chain; its full sequence is Cell division protein ZapE (375 aa).

78–85 (GGVGRGKT) contacts ATP.

Belongs to the AFG1 ATPase family. ZapE subfamily. Interacts with FtsZ.

The protein resides in the cytoplasm. Reduces the stability of FtsZ polymers in the presence of ATP. This Escherichia coli O157:H7 protein is Cell division protein ZapE.